The primary structure comprises 56 residues: Large ribosomal subunit protein bL32 (56 aa).

The disordered stretch occupies residues 1–29 (MAVQQNKPSRSKRGMRRSHDALTTSSVSV).

Belongs to the bacterial ribosomal protein bL32 family.

The sequence is that of Large ribosomal subunit protein bL32 from Pectobacterium atrosepticum (strain SCRI 1043 / ATCC BAA-672) (Erwinia carotovora subsp. atroseptica).